Reading from the N-terminus, the 307-residue chain is Acetaldehyde dehydrogenase 2 (307 aa).

13–16 (SGNI) provides a ligand contact to NAD(+). Cysteine 132 functions as the Acyl-thioester intermediate in the catalytic mechanism. Residues 163–171 (SIGPGTRAN) and asparagine 274 each bind NAD(+).

It belongs to the acetaldehyde dehydrogenase family.

It carries out the reaction acetaldehyde + NAD(+) + CoA = acetyl-CoA + NADH + H(+). The sequence is that of Acetaldehyde dehydrogenase 2 from Methylibium petroleiphilum (strain ATCC BAA-1232 / LMG 22953 / PM1).